The chain runs to 81 residues: RNA-binding protein Hfq (81 aa).

In terms of domain architecture, Sm spans Asp-11 to Ile-71.

This sequence belongs to the Hfq family. In terms of assembly, homohexamer.

Its function is as follows. RNA chaperone that binds small regulatory RNA (sRNAs) and mRNAs to facilitate mRNA translational regulation in response to envelope stress, environmental stress and changes in metabolite concentrations. Also binds with high specificity to tRNAs. The protein is RNA-binding protein Hfq of Clostridium acetobutylicum (strain ATCC 824 / DSM 792 / JCM 1419 / IAM 19013 / LMG 5710 / NBRC 13948 / NRRL B-527 / VKM B-1787 / 2291 / W).